The primary structure comprises 198 residues: dITP/XTP pyrophosphatase (198 aa).

Position 8 to 13 (8 to 13 (TKNKGK)) interacts with substrate. Asp-69 acts as the Proton acceptor in catalysis. A Mg(2+)-binding site is contributed by Asp-69. Residues Ser-70, 152 to 155 (FGYD), Lys-175, and 180 to 181 (HR) each bind substrate.

This sequence belongs to the HAM1 NTPase family. Homodimer. It depends on Mg(2+) as a cofactor.

It catalyses the reaction XTP + H2O = XMP + diphosphate + H(+). It carries out the reaction dITP + H2O = dIMP + diphosphate + H(+). The catalysed reaction is ITP + H2O = IMP + diphosphate + H(+). In terms of biological role, pyrophosphatase that catalyzes the hydrolysis of nucleoside triphosphates to their monophosphate derivatives, with a high preference for the non-canonical purine nucleotides XTP (xanthosine triphosphate), dITP (deoxyinosine triphosphate) and ITP. Seems to function as a house-cleaning enzyme that removes non-canonical purine nucleotides from the nucleotide pool, thus preventing their incorporation into DNA/RNA and avoiding chromosomal lesions. This chain is dITP/XTP pyrophosphatase, found in Shouchella clausii (strain KSM-K16) (Alkalihalobacillus clausii).